Reading from the N-terminus, the 605-residue chain is Glucose-6-phosphate isomerase (605 aa).

The active-site Proton donor is Glu410. Active-site residues include His441 and Lys569.

The protein belongs to the GPI family.

It is found in the cytoplasm. The enzyme catalyses alpha-D-glucose 6-phosphate = beta-D-fructose 6-phosphate. It functions in the pathway carbohydrate degradation; glycolysis; D-glyceraldehyde 3-phosphate and glycerone phosphate from D-glucose: step 2/4. The chain is Glucose-6-phosphate isomerase (PGI) from Leishmania mexicana.